The primary structure comprises 403 residues: High affinity transport system protein p37 (403 aa).

Positions 1-23 (MLKKLKNFILFSSIFSPIAFAIS) are cleaved as a signal peptide. A lipid anchor (N-palmitoyl cysteine) is attached at Cys-24. Cys-24 is lipidated: S-diacylglycerol cysteine.

The protein resides in the cell membrane. Its function is as follows. P37 is part of a high-affinity transport system. The chain is High affinity transport system protein p37 (p37) from Mesomycoplasma hyorhinis (Mycoplasma hyorhinis).